A 475-amino-acid chain; its full sequence is MSKSEFQVIIVGGSIGGLTLAHCLRRAGIDHIILEKSSSPAPQIGASIGILPNGARILDQLQLWSEVEDYIEPLSTATIGLPDGFSFSSSYPQIINERFGFPIAFLDRQLLLEILYQRYPDRSKIRLEEKVTAVETSDSGATVTTSNGSVYRGGLVVGADGVHSIVRREIWRASKKLSSGLTAEFRCIFGISSAIKGLNVGEQVNALFDGLTIVTIHGKNGRVYWFVIQKLDKKYIYPNCPRYTKHDTTVAAEQLRNIQFYRDITFGQVWENRETASMTVLEENTFKTWHYGRLVLLGDSVHKMTPNIGQGANMAIEDAAALTNLLHNLQKISGTLSSTAAQIETILRQYRRIRYERVESIYRDSRFLVRFQARDGLLNILLSRYYAPYAGDLPADMASKTIADGVMCDFLPPPKRSGDGWKRYRRDGQLRGWRFHAMLCILMLAILYTWVGRTNLDSIVFSACGSLFQKLSVPT.

Residues 8–24 (VIIVGGSIGGLTLAHCL) traverse the membrane as a helical segment. FAD is bound by residues Glu-35, Gly-49, and Arg-108. Residue Asn-147 is glycosylated (N-linked (GlcNAc...) asparagine). Positions 299 and 312 each coordinate FAD. A helical transmembrane segment spans residues 432–451 (GWRFHAMLCILMLAILYTWV).

Belongs to the paxM FAD-dependent monooxygenase family. The cofactor is FAD.

It is found in the membrane. The protein operates within secondary metabolite biosynthesis. FAD-dependent monooxygenase; part of the gene cluster that mediates the biosynthesis of the indole diterpenes janthitremanes such as shearinine K or shearinine A. The geranylgeranyl diphosphate (GGPP) synthase janG catalyzes the first step in janthitremane biosynthesis via conversion of farnesyl pyrophosphate and isopentyl pyrophosphate into geranylgeranyl pyrophosphate (GGPP). Condensation of indole-3-glycerol phosphate with GGPP by the prenyl transferase janC then forms 3-geranylgeranylindole (3-GGI). Epoxidation by the FAD-dependent monooxygenase janM leads to a epoxidized-GGI that is substrate of the terpene cyclase janB for cyclization to yield paspaline. Paspaline is subsequently converted to 13-desoxypaspaline by the cytochrome P450 monooxygenase janP, via beta-PC-M6 in a series of alpha-face oxidations. The cytochrome P450 monooxygenase janQ is proposed to carry out sequential beta-face oxidation steps at C-7 and C-13 of 13-desoxypaspaline to form paspalicine and paspalinine respectively. The indole diterpene prenyltransferase janD may then convert paspalinine into shearinine K which is substrate of janO and/or additional enzymes for oxidation and cyclization to generate shearinine A. This Penicillium janthinellum (Penicillium vitale) protein is FAD-dependent monooxygenase janM.